We begin with the raw amino-acid sequence, 661 residues long: Peroxisomal acyl-coenzyme A oxidase 1 (661 aa).

A Phosphoserine modification is found at Ser26. Residue Lys65 is modified to N6-acetyllysine. An N6-succinyllysine mark is found at Lys89 and Lys90. Thr139 contributes to the FAD binding site. Position 159 is an N6-succinyllysine (Lys159). Gly178 provides a ligand contact to FAD. Position 216 is an N6-acetyllysine (Lys216). Lys241 carries the N6-succinyllysine modification. Residues Lys255, Lys267, and Lys272 each carry the N6-acetyllysine modification. Lys349 is modified (N6-succinyllysine). Glu421 (proton acceptor) is an active-site residue. N6-acetyllysine; alternate occurs at positions 437 and 446. Residues Lys437 and Lys446 each carry the N6-succinyllysine; alternate modification. The residue at position 500 (Lys500) is an N6-acetyllysine. Lys512 is modified (N6-acetyllysine; alternate). An N6-succinyllysine; alternate modification is found at Lys512. Residue Lys542 is modified to N6-succinyllysine. Lys637 carries the N6-acetyllysine; alternate modification. Lys637 is subject to N6-succinyllysine; alternate. An N6-succinyllysine modification is found at Lys643. A Phosphoserine modification is found at Ser649. The residue at position 652 (Lys652) is an N6-acetyllysine. At Lys655 the chain carries N6-succinyllysine. Positions 659–661 (SKL) match the Microbody targeting signal motif.

It belongs to the acyl-CoA oxidase family. In terms of assembly, homodimer. The enzyme contains three components A, B and C, the latter two being produced from the first by a proteolytic cleavage. Interacts with LONP2. It depends on FAD as a cofactor. As to expression, expressed in Schwann cells. Expressed (at protein level) in liver.

Its subcellular location is the peroxisome. It carries out the reaction a 2,3-saturated acyl-CoA + O2 = a (2E)-enoyl-CoA + H2O2. It catalyses the reaction hexadecanoyl-CoA + O2 = (2E)-hexadecenoyl-CoA + H2O2. The catalysed reaction is dodecanoyl-CoA + O2 = (2E)-dodecenoyl-CoA + H2O2. The enzyme catalyses octanoyl-CoA + O2 = (2E)-octenoyl-CoA + H2O2. It carries out the reaction decanoyl-CoA + O2 = (2E)-decenoyl-CoA + H2O2. It catalyses the reaction tetradecanoyl-CoA + O2 = (2E)-tetradecenoyl-CoA + H2O2. The catalysed reaction is hexadecanedioyl-CoA + O2 = (2E)-hexadecenedioyl-CoA + H2O2. The enzyme catalyses tetracosanoyl-CoA + O2 = (2E)-tetracosenoyl-CoA + H2O2. It carries out the reaction glutaryl-CoA + O2 = (2E)-glutaconyl-CoA + H2O2. It catalyses the reaction hexanoyl-CoA + O2 = (2E)-hexenoyl-CoA + H2O2. The catalysed reaction is octadecanoyl-CoA + O2 = (2E)-octadecenoyl-CoA + H2O2. The enzyme catalyses (5Z,8Z,11Z,14Z,17Z)-eicosapentaenoyl-CoA + O2 = (2E,5Z,8Z,11Z,14Z,17Z)-icosahexaenoyl-CoA + H2O2. It carries out the reaction (6Z,9Z,12Z,15Z,18Z,21Z)-tetracosahexaenoyl-CoA + O2 = (2E,6Z,9Z,12Z,15Z,18Z,21Z)-tetracosaheptaenoyl-CoA + H2O2. It functions in the pathway lipid metabolism; peroxisomal fatty acid beta-oxidation. Its function is as follows. Involved in the initial and rate-limiting step of peroxisomal beta-oxidation of straight-chain saturated and unsaturated very-long-chain fatty acids. Catalyzes the desaturation of fatty acyl-CoAs such as palmitoyl-CoA (hexadecanoyl-CoA) to 2-trans-enoyl-CoAs ((2E)-enoyl-CoAs) such as (2E)-hexadecenoyl-CoA, and donates electrons directly to molecular oxygen (O(2)), thereby producing hydrogen peroxide (H(2)O(2)). Shows highest activity against medium-chain fatty acyl-CoAs. Shows optimum activity with a chain length of 10 carbons (decanoyl-CoA) in vitro. Functionally, is active against a much broader range of substrates and shows activity towards long-chain acyl-CoAs. The sequence is that of Peroxisomal acyl-coenzyme A oxidase 1 from Rattus norvegicus (Rat).